The sequence spans 789 residues: Mediator of RNA polymerase II transcription subunit 15 (789 aa).

Residues 9–73 are interaction with SREBF1; that stretch reads DWRSAAFRQK…IHFRDIHNKK (65 aa). 2 disordered regions span residues 88 to 140 and 257 to 326; these read LTGG…APHG and QQQA…PLVS. The span at 89-102 shows a compositional bias: low complexity; it reads TGGPTPGAAGIGMP. Positions 108–118 are enriched in gly residues; sequence QSLGGMGGLGA. 3 stretches are compositionally biased toward low complexity: residues 257–274, 282–291, and 302–326; these read QQQA…SMQQ, ALPQQLSQLH, and AQQS…PLVS. Asymmetric dimethylarginine is present on R347. A disordered region spans residues 404–531; sequence RFPPTSTMSA…PAGSSQAEEQ (128 aa). Over residues 407–426 the composition is skewed to polar residues; it reads PTSTMSAGPSSSISLGGQPT. Low complexity predominate over residues 427-450; that stretch reads TQVSQSSLTMLSSPSPGQQVQTPQ. A compositionally biased stretch (pro residues) spans 451–463; sequence SMPPPPQPSPQPG. A compositionally biased stretch (low complexity) spans 464-483; that stretch reads SQPNSNVSSGPAPSPSSFLP. 2 stretches are compositionally biased toward polar residues: residues 494-504 and 512-530; these read VTARTPQNFSV and TPVN…QAEE. The Nuclear localization signal signature appears at 548–565; the sequence is RRMINKIDKNEDRKKDLS. A Phosphothreonine modification is found at T604.

It belongs to the Mediator complex subunit 15 family. Component of the Mediator complex, which is composed of MED1, MED4, MED6, MED7, MED8, MED9, MED10, MED11, MED12, MED13, MED13L, MED14, MED15, MED16, MED17, MED18, MED19, MED20, MED21, MED22, MED23, MED24, MED25, MED26, MED27, MED29, MED30, MED31, CCNC, CDK8 and CDC2L6/CDK11. The MED12, MED13, CCNC and CDK8 subunits form a distinct module termed the CDK8 module. Mediator containing the CDK8 module is less active than Mediator lacking this module in supporting transcriptional activation. Individual preparations of the Mediator complex lacking one or more distinct subunits have been variously termed ARC, CRSP, DRIP, PC2, SMCC and TRAP. Interacts with SMAD2, SMAD3, SREBF1 and SREBF2. Interacts with WWTR1. Interacts with TRIM11. Ubiquitinated by TRIM11, leading to proteasomal degradation.

Its subcellular location is the cytoplasm. It is found in the nucleus. Component of the Mediator complex, a coactivator involved in the regulated transcription of nearly all RNA polymerase II-dependent genes. Mediator functions as a bridge to convey information from gene-specific regulatory proteins to the basal RNA polymerase II transcription machinery. Mediator is recruited to promoters by direct interactions with regulatory proteins and serves as a scaffold for the assembly of a functional preinitiation complex with RNA polymerase II and the general transcription factors. Required for cholesterol-dependent gene regulation. Positively regulates the Nodal signaling pathway. In Mus musculus (Mouse), this protein is Mediator of RNA polymerase II transcription subunit 15 (Med15).